A 130-amino-acid chain; its full sequence is S-adenosylmethionine decarboxylase proenzyme (130 aa).

Ser78 functions as the Schiff-base intermediate with substrate; via pyruvic acid in the catalytic mechanism. Ser78 is modified (pyruvic acid (Ser); by autocatalysis). His83 functions as the Proton acceptor; for processing activity in the catalytic mechanism. The active-site Proton donor; for catalytic activity is Cys98.

This sequence belongs to the prokaryotic AdoMetDC family. Type 1 subfamily. Heterotetramer of two alpha and two beta chains arranged as a dimer of alpha/beta heterodimers. Requires pyruvate as cofactor. Is synthesized initially as an inactive proenzyme. Formation of the active enzyme involves a self-maturation process in which the active site pyruvoyl group is generated from an internal serine residue via an autocatalytic post-translational modification. Two non-identical subunits are generated from the proenzyme in this reaction, and the pyruvate is formed at the N-terminus of the alpha chain, which is derived from the carboxyl end of the proenzyme. The post-translation cleavage follows an unusual pathway, termed non-hydrolytic serinolysis, in which the side chain hydroxyl group of the serine supplies its oxygen atom to form the C-terminus of the beta chain, while the remainder of the serine residue undergoes an oxidative deamination to produce ammonia and the pyruvoyl group blocking the N-terminus of the alpha chain.

It catalyses the reaction S-adenosyl-L-methionine + H(+) = S-adenosyl 3-(methylsulfanyl)propylamine + CO2. Its pathway is amine and polyamine biosynthesis; S-adenosylmethioninamine biosynthesis; S-adenosylmethioninamine from S-adenosyl-L-methionine: step 1/1. In terms of biological role, catalyzes the decarboxylation of S-adenosylmethionine to S-adenosylmethioninamine (dcAdoMet), the propylamine donor required for the synthesis of the polyamines spermine and spermidine from the diamine putrescine. This chain is S-adenosylmethionine decarboxylase proenzyme, found in Aeropyrum pernix (strain ATCC 700893 / DSM 11879 / JCM 9820 / NBRC 100138 / K1).